The sequence spans 149 residues: NPC intracellular cholesterol transporter 2 (149 aa).

The first 19 residues, 1-19 (MHFLAAAFLLLTLSASALA), serve as a signal peptide directing secretion. Disulfide bonds link cysteine 27/cysteine 140, cysteine 42/cysteine 47, and cysteine 93/cysteine 99. Asparagine 58 carries N-linked (GlcNAc...) asparagine glycosylation. Lysine 116 is modified (N6-acetyllysine).

This sequence belongs to the NPC2 family. As to quaternary structure, interacts with NPC1 (via the second lumenal domain) in a cholestrol-dependent manner. Interacts with NUS1/NgBR, the interaction stabilizes NCP2 and regulates cholesterol trafficking. Interacts with DHDDS. Interacts with NEDD4L (via C2 domain). Interacts with NPC1L1. In terms of processing, N-glycosylated. Found in the epididymal fluid as a 19 kDa glycoprotein that is processed during its passage through the epididymis into a 16 kDa protein. As to expression, found in the fluid from the distal caput to cauda epididymis, not detected in the rete testis and the proximal and middle caput epididymal fluids (at protein level).

It localises to the secreted. It is found in the endoplasmic reticulum. The protein resides in the lysosome. The enzyme catalyses cholesterol(in) = cholesterol(out). In terms of biological role, intracellular cholesterol transporter which acts in concert with NPC1 and plays an important role in the egress of cholesterol from the lysosomal compartment. Unesterified cholesterol that has been released from LDLs in the lumen of the late endosomes/lysosomes is transferred by NPC2 to the cholesterol-binding pocket in the N-terminal domain of NPC1. May bind and mobilize cholesterol that is associated with membranes. NPC2 binds cholesterol with a 1:1 stoichiometry. Can bind a variety of sterols, including lathosterol, desmosterol and the plant sterols stigmasterol and beta-sitosterol. The secreted form of NCP2 regulates biliary cholesterol secretion via stimulation of ABCG5/ABCG8-mediated cholesterol transport. This Sus scrofa (Pig) protein is NPC intracellular cholesterol transporter 2.